The primary structure comprises 274 residues: Diaminopimelate epimerase (274 aa).

Residues Asn11, Gln44, and Asn64 each contribute to the substrate site. The active-site Proton donor is the Cys73. Substrate contacts are provided by residues 74-75 (GN), Asn157, Asn190, and 208-209 (ER). The active-site Proton acceptor is Cys217. Substrate is bound at residue 218–219 (GS).

It belongs to the diaminopimelate epimerase family. As to quaternary structure, homodimer.

The protein localises to the cytoplasm. The catalysed reaction is (2S,6S)-2,6-diaminopimelate = meso-2,6-diaminopimelate. It functions in the pathway amino-acid biosynthesis; L-lysine biosynthesis via DAP pathway; DL-2,6-diaminopimelate from LL-2,6-diaminopimelate: step 1/1. Functionally, catalyzes the stereoinversion of LL-2,6-diaminopimelate (L,L-DAP) to meso-diaminopimelate (meso-DAP), a precursor of L-lysine and an essential component of the bacterial peptidoglycan. This chain is Diaminopimelate epimerase, found in Pectobacterium atrosepticum (strain SCRI 1043 / ATCC BAA-672) (Erwinia carotovora subsp. atroseptica).